Reading from the N-terminus, the 51-residue chain is ATP synthase protein 8 (51 aa).

The helical transmembrane segment at 7-27 (LNWAMMTIMFSLSLLVSMIIL) threads the bilayer.

The protein belongs to the ATPase protein 8 family. F-type ATPases have 2 components, CF(1) - the catalytic core - and CF(0) - the membrane proton channel.

It is found in the mitochondrion membrane. In terms of biological role, mitochondrial membrane ATP synthase (F(1)F(0) ATP synthase or Complex V) produces ATP from ADP in the presence of a proton gradient across the membrane which is generated by electron transport complexes of the respiratory chain. F-type ATPases consist of two structural domains, F(1) - containing the extramembraneous catalytic core and F(0) - containing the membrane proton channel, linked together by a central stalk and a peripheral stalk. During catalysis, ATP synthesis in the catalytic domain of F(1) is coupled via a rotary mechanism of the central stalk subunits to proton translocation. Part of the complex F(0) domain. Minor subunit located with subunit a in the membrane. The polypeptide is ATP synthase protein 8 (MT-ATP8) (Limulus polyphemus (Atlantic horseshoe crab)).